The following is a 308-amino-acid chain: Protoheme IX farnesyltransferase (308 aa).

Helical transmembrane passes span 31 to 51, 53 to 73, 102 to 122, 124 to 144, 149 to 169, 170 to 190, 242 to 262, and 288 to 308; these read VIEL…RGTV, PLLI…ANTL, HALI…WLST, LLSG…YTML, TSQN…IGWS, AVTG…FFWT, LATG…FLVM, and YLAV…PTLL.

Belongs to the UbiA prenyltransferase family. Protoheme IX farnesyltransferase subfamily.

The protein localises to the cell membrane. It carries out the reaction heme b + (2E,6E)-farnesyl diphosphate + H2O = Fe(II)-heme o + diphosphate. It participates in porphyrin-containing compound metabolism; heme O biosynthesis; heme O from protoheme: step 1/1. Converts heme B (protoheme IX) to heme O by substitution of the vinyl group on carbon 2 of heme B porphyrin ring with a hydroxyethyl farnesyl side group. This chain is Protoheme IX farnesyltransferase, found in Mycolicibacterium smegmatis (strain ATCC 700084 / mc(2)155) (Mycobacterium smegmatis).